A 416-amino-acid chain; its full sequence is S-adenosylmethionine synthase (416 aa).

H14 lines the ATP pocket. D16 contacts Mg(2+). E42 provides a ligand contact to K(+). L-methionine is bound by residues E55 and Q98. The flexible loop stretch occupies residues 98-108 (QSADINQGVDR). ATP is bound by residues 164–166 (DAK), 240–241 (KF), D249, 255–256 (RK), A272, and K276. D249 lines the L-methionine pocket. Residue K280 participates in L-methionine binding.

This sequence belongs to the AdoMet synthase family. In terms of assembly, homotetramer; dimer of dimers. Mg(2+) is required as a cofactor. The cofactor is K(+).

The protein resides in the cytoplasm. It catalyses the reaction L-methionine + ATP + H2O = S-adenosyl-L-methionine + phosphate + diphosphate. The protein operates within amino-acid biosynthesis; S-adenosyl-L-methionine biosynthesis; S-adenosyl-L-methionine from L-methionine: step 1/1. In terms of biological role, catalyzes the formation of S-adenosylmethionine (AdoMet) from methionine and ATP. The overall synthetic reaction is composed of two sequential steps, AdoMet formation and the subsequent tripolyphosphate hydrolysis which occurs prior to release of AdoMet from the enzyme. The sequence is that of S-adenosylmethionine synthase from Flavobacterium psychrophilum (strain ATCC 49511 / DSM 21280 / CIP 103535 / JIP02/86).